The chain runs to 559 residues: Glycerol kinase (559 aa).

T20 contacts ADP. T20, S21, and S22 together coordinate ATP. T20 is a sn-glycerol 3-phosphate binding site. R24 is a binding site for ADP. Positions 94, 95, and 148 each coordinate sn-glycerol 3-phosphate. 3 residues coordinate glycerol: R94, E95, and Y148. G252 is a beta-D-fructose 1,6-bisphosphate binding site. D265 contacts sn-glycerol 3-phosphate. Glycerol-binding residues include D265 and Q266. ADP is bound by residues T287, G332, G433, and N437. Residues T287, G332, and G433 each coordinate ATP. E501 contributes to the Zn(2+) binding site. Residues 532 to 552 form a helical membrane-spanning segment; it reads IFCSLPLGFFIVSSVVMLIGA.

The protein belongs to the FGGY kinase family.

The protein resides in the mitochondrion outer membrane. It is found in the nucleus. Its subcellular location is the cytoplasm. It localises to the cytosol. It catalyses the reaction glycerol + ATP = sn-glycerol 3-phosphate + ADP + H(+). Its pathway is polyol metabolism; glycerol degradation via glycerol kinase pathway; sn-glycerol 3-phosphate from glycerol: step 1/1. Its function is as follows. Kinase that plays a key role in glycerol metabolism, catalyzing its phosphorylation to produce sn-glycerol 3-phosphate. Sn-glycerol 3-phosphate is a crucial intermediate in various metabolic pathways, such as the synthesis of glycerolipids and triglycerides, glycogenesis, glycolysis and gluconeogenesis. The protein is Glycerol kinase of Bos taurus (Bovine).